A 519-amino-acid chain; its full sequence is Cysteine--tRNA ligase (519 aa).

Cysteine 30 lines the Zn(2+) pocket. The 'HIGH' region motif lies at 32–42 (PTVYDRAHLGN). 3 residues coordinate Zn(2+): cysteine 221, histidine 253, and glutamate 257. Positions 286–290 (KMSKS) match the 'KMSKS' region motif. Lysine 289 serves as a coordination point for ATP.

It belongs to the class-I aminoacyl-tRNA synthetase family. As to quaternary structure, monomer. The cofactor is Zn(2+).

The protein resides in the cytoplasm. The enzyme catalyses tRNA(Cys) + L-cysteine + ATP = L-cysteinyl-tRNA(Cys) + AMP + diphosphate. This Cereibacter sphaeroides (strain KD131 / KCTC 12085) (Rhodobacter sphaeroides) protein is Cysteine--tRNA ligase.